The primary structure comprises 302 residues: O-antigen biosynthesis glycosyltransferase WbnK (302 aa).

The protein belongs to the glycosyltransferase 11 family.

It carries out the reaction beta-D-Gal-(1-&gt;3)-alpha-D-GalNAc-(1-&gt;3)-alpha-D-GalNAc-di-trans,octa-cis-undecaprenyl diphosphate + GDP-beta-L-fucose = alpha-L-Fuc-(1-&gt;2)-beta-D-Gal-(1-&gt;3)-alpha-D-GalNAc-(1-&gt;3)-alpha-D-GalNAc-di-trans,octa-cis-undecaprenyl diphosphate + GDP + H(+). It participates in bacterial outer membrane biogenesis; LPS O-antigen biosynthesis. Functionally, involved in the assembly of the O-repeating unit during O-antigen biosynthesis. The chain is O-antigen biosynthesis glycosyltransferase WbnK from Escherichia coli.